The primary structure comprises 122 residues: Large ribosomal subunit protein uL14c (122 aa).

The protein belongs to the universal ribosomal protein uL14 family. Part of the 50S ribosomal subunit.

The protein localises to the plastid. Its subcellular location is the chloroplast. Functionally, binds to 23S rRNA. This chain is Large ribosomal subunit protein uL14c (rpl14), found in Bigelowiella natans (Pedinomonas minutissima).